The following is a 119-amino-acid chain: Nascent polypeptide-associated complex protein (119 aa).

The NAC-A/B domain maps to 5-73; sequence RMNSREMRRL…MREVPKEPEE (69 aa).

The protein belongs to the NAC-alpha family. In terms of assembly, homodimer. Interacts with the ribosome. Binds ribosomal RNA.

In terms of biological role, contacts the emerging nascent chain on the ribosome. In Thermoplasma acidophilum (strain ATCC 25905 / DSM 1728 / JCM 9062 / NBRC 15155 / AMRC-C165), this protein is Nascent polypeptide-associated complex protein.